Consider the following 302-residue polypeptide: Urease accessory protein UreD 2 (302 aa).

It belongs to the UreD family. UreD, UreF and UreG form a complex that acts as a GTP-hydrolysis-dependent molecular chaperone, activating the urease apoprotein by helping to assemble the nickel containing metallocenter of UreC. The UreE protein probably delivers the nickel.

Its subcellular location is the cytoplasm. Functionally, required for maturation of urease via the functional incorporation of the urease nickel metallocenter. This is Urease accessory protein UreD 2 from Brucella ovis (strain ATCC 25840 / 63/290 / NCTC 10512).